Reading from the N-terminus, the 157-residue chain is 2-C-methyl-D-erythritol 2,4-cyclodiphosphate synthase (157 aa).

Asp8 and His10 together coordinate a divalent metal cation. 4-CDP-2-C-methyl-D-erythritol 2-phosphate-binding positions include 8 to 10 and 34 to 35; these read DVH and HS. His42 contacts a divalent metal cation. 4-CDP-2-C-methyl-D-erythritol 2-phosphate is bound by residues 56-58, 61-65, 132-135, Phe139, and Arg142; these read DIG, FPDTD, and TTTE.

The protein belongs to the IspF family. Homotrimer. A divalent metal cation is required as a cofactor.

The catalysed reaction is 4-CDP-2-C-methyl-D-erythritol 2-phosphate = 2-C-methyl-D-erythritol 2,4-cyclic diphosphate + CMP. It functions in the pathway isoprenoid biosynthesis; isopentenyl diphosphate biosynthesis via DXP pathway; isopentenyl diphosphate from 1-deoxy-D-xylulose 5-phosphate: step 4/6. Its function is as follows. Involved in the biosynthesis of isopentenyl diphosphate (IPP) and dimethylallyl diphosphate (DMAPP), two major building blocks of isoprenoid compounds. Catalyzes the conversion of 4-diphosphocytidyl-2-C-methyl-D-erythritol 2-phosphate (CDP-ME2P) to 2-C-methyl-D-erythritol 2,4-cyclodiphosphate (ME-CPP) with a corresponding release of cytidine 5-monophosphate (CMP). This Geotalea uraniireducens (strain Rf4) (Geobacter uraniireducens) protein is 2-C-methyl-D-erythritol 2,4-cyclodiphosphate synthase.